The following is a 434-amino-acid chain: Chaperone SurA (434 aa).

Positions 1 to 22 are cleaved as a signal peptide; the sequence is MKHSKKIIFALLALAMSNTSMA. 2 PpiC domains span residues 173–274 and 283–383; these read DVEF…KVVD and VEEV…QLES.

Its subcellular location is the periplasm. It carries out the reaction [protein]-peptidylproline (omega=180) = [protein]-peptidylproline (omega=0). Chaperone involved in the correct folding and assembly of outer membrane proteins. Recognizes specific patterns of aromatic residues and the orientation of their side chains, which are found more frequently in integral outer membrane proteins. May act in both early periplasmic and late outer membrane-associated steps of protein maturation. This is Chaperone SurA from Shewanella frigidimarina (strain NCIMB 400).